The chain runs to 102 residues: Trp operon repressor homolog (102 aa).

A DNA-binding region spans residues 59-82 (QRQISQMLGVGIATITRGSNELKL).

It belongs to the TrpR family. As to quaternary structure, homodimer.

The protein localises to the cytoplasm. Functionally, this protein is an aporepressor. When complexed with L-tryptophan it binds the operator region of the trp operon and prevents the initiation of transcription. The sequence is that of Trp operon repressor homolog from Vibrio vulnificus (strain CMCP6).